The chain runs to 892 residues: Putative disease resistance protein At4g10780 (892 aa).

Positions 24-63 (SLGNYIHKLKDNIVALEKAIEDLTATRDDVLRRVQMEEGK) form a coiled coil. Residues 137–440 (IVAAPAPKLE…ICEGFIDGNI (304 aa)) form the NB-ARC domain. 180–187 (GMGGVGKT) is a binding site for ATP. LRR repeat units lie at residues 515-536 (AVRR…PECP), 537-559 (ELTT…FFRH), 562-584 (KLVV…ISEL), 586-608 (ALRY…QDLK), 609-631 (TLIH…SKLS), and 632-654 (SLRT…KELH).

It belongs to the disease resistance NB-LRR family.

Potential disease resistance protein. This is Putative disease resistance protein At4g10780 from Arabidopsis thaliana (Mouse-ear cress).